A 379-amino-acid polypeptide reads, in one-letter code: Citrate utilization protein B (379 aa).

[4Fe-4S] cluster is bound by residues Cys28, Cys31, Cys34, Cys38, Cys62, Cys65, Cys68, and Cys72.

The polypeptide is Citrate utilization protein B (citB) (Escherichia coli).